Here is a 280-residue protein sequence, read N- to C-terminus: 4-hydroxy-3-methylbut-2-enyl diphosphate reductase (280 aa).

Cysteine 12 contacts [4Fe-4S] cluster. Histidine 40 and histidine 72 together coordinate (2E)-4-hydroxy-3-methylbut-2-enyl diphosphate. Positions 40 and 72 each coordinate dimethylallyl diphosphate. Residues histidine 40 and histidine 72 each contribute to the isopentenyl diphosphate site. A [4Fe-4S] cluster-binding site is contributed by cysteine 94. Histidine 122 provides a ligand contact to (2E)-4-hydroxy-3-methylbut-2-enyl diphosphate. Histidine 122 provides a ligand contact to dimethylallyl diphosphate. Histidine 122 lines the isopentenyl diphosphate pocket. Glutamate 124 (proton donor) is an active-site residue. Threonine 160 provides a ligand contact to (2E)-4-hydroxy-3-methylbut-2-enyl diphosphate. Cysteine 188 is a [4Fe-4S] cluster binding site. 3 residues coordinate (2E)-4-hydroxy-3-methylbut-2-enyl diphosphate: serine 216, asparagine 218, and serine 260. Residues serine 216, asparagine 218, and serine 260 each coordinate dimethylallyl diphosphate. Isopentenyl diphosphate contacts are provided by serine 216, asparagine 218, and serine 260.

The protein belongs to the IspH family. Requires [4Fe-4S] cluster as cofactor.

It catalyses the reaction isopentenyl diphosphate + 2 oxidized [2Fe-2S]-[ferredoxin] + H2O = (2E)-4-hydroxy-3-methylbut-2-enyl diphosphate + 2 reduced [2Fe-2S]-[ferredoxin] + 2 H(+). The enzyme catalyses dimethylallyl diphosphate + 2 oxidized [2Fe-2S]-[ferredoxin] + H2O = (2E)-4-hydroxy-3-methylbut-2-enyl diphosphate + 2 reduced [2Fe-2S]-[ferredoxin] + 2 H(+). The protein operates within isoprenoid biosynthesis; dimethylallyl diphosphate biosynthesis; dimethylallyl diphosphate from (2E)-4-hydroxy-3-methylbutenyl diphosphate: step 1/1. Its pathway is isoprenoid biosynthesis; isopentenyl diphosphate biosynthesis via DXP pathway; isopentenyl diphosphate from 1-deoxy-D-xylulose 5-phosphate: step 6/6. Functionally, catalyzes the conversion of 1-hydroxy-2-methyl-2-(E)-butenyl 4-diphosphate (HMBPP) into a mixture of isopentenyl diphosphate (IPP) and dimethylallyl diphosphate (DMAPP). Acts in the terminal step of the DOXP/MEP pathway for isoprenoid precursor biosynthesis. This chain is 4-hydroxy-3-methylbut-2-enyl diphosphate reductase, found in Pelobacter propionicus (strain DSM 2379 / NBRC 103807 / OttBd1).